The primary structure comprises 429 residues: ATP-dependent Clp protease ATP-binding subunit ClpX (429 aa).

One can recognise a ClpX-type ZB domain in the interval 1–54 (MARSKSQKIEGCSFCGRTRAEAEGKIISAKSVAICFECSKICHNLFKEESDKPA). Zn(2+) is bound by residues Cys12, Cys15, Cys35, and Cys38. 119–126 (PTGSGKTL) contributes to the ATP binding site.

It belongs to the ClpX chaperone family. As to quaternary structure, component of the ClpX-ClpP complex. Forms a hexameric ring that, in the presence of ATP, binds to fourteen ClpP subunits assembled into a disk-like structure with a central cavity, resembling the structure of eukaryotic proteasomes.

Its function is as follows. ATP-dependent specificity component of the Clp protease. It directs the protease to specific substrates. Can perform chaperone functions in the absence of ClpP. The protein is ATP-dependent Clp protease ATP-binding subunit ClpX of Borrelia duttonii (strain Ly).